The chain runs to 510 residues: NADH-quinone oxidoreductase subunit N (510 aa).

A run of 14 helical transmembrane segments spans residues 14–34 (LLPE…DLFA), 42–62 (VIGW…IINM), 84–104 (AFKL…LSYL), 113–133 (GEYY…ASSA), 135–155 (LITL…LVGL), 170–190 (VVSG…VYGL), 208–228 (MAGY…GLAF), 247–267 (PTPV…ALIF), 286–306 (FFFE…MIIG), 323–343 (SGIA…SLFF), 346–366 (VIFY…VIMV), 390–410 (AIAM…VGFF), 426–446 (WLAA…FGII), and 466–486 (IWTF…FPGL).

This sequence belongs to the complex I subunit 2 family. NDH-1 is composed of 14 different subunits. Subunits NuoA, H, J, K, L, M, N constitute the membrane sector of the complex.

It localises to the cell membrane. The enzyme catalyses a quinone + NADH + 5 H(+)(in) = a quinol + NAD(+) + 4 H(+)(out). Functionally, NDH-1 shuttles electrons from NADH, via FMN and iron-sulfur (Fe-S) centers, to quinones in the respiratory chain. The immediate electron acceptor for the enzyme in this species is believed to be a menaquinone. Couples the redox reaction to proton translocation (for every two electrons transferred, four hydrogen ions are translocated across the cytoplasmic membrane), and thus conserves the redox energy in a proton gradient. The polypeptide is NADH-quinone oxidoreductase subunit N (Brevibacillus brevis (strain 47 / JCM 6285 / NBRC 100599)).